Here is a 271-residue protein sequence, read N- to C-terminus: L-aspartate dehydrogenase (271 aa).

Residues A124 and N192 each coordinate NAD(+). H222 is a catalytic residue.

This sequence belongs to the L-aspartate dehydrogenase family.

The enzyme catalyses L-aspartate + NADP(+) + H2O = oxaloacetate + NH4(+) + NADPH + H(+). It carries out the reaction L-aspartate + NAD(+) + H2O = oxaloacetate + NH4(+) + NADH + H(+). Its pathway is cofactor biosynthesis; NAD(+) biosynthesis; iminoaspartate from L-aspartate (dehydrogenase route): step 1/1. Its function is as follows. Specifically catalyzes the NAD or NADP-dependent dehydrogenation of L-aspartate to iminoaspartate. This is L-aspartate dehydrogenase from Methanosarcina acetivorans (strain ATCC 35395 / DSM 2834 / JCM 12185 / C2A).